The sequence spans 375 residues: 23S rRNA (uracil(747)-C(5))-methyltransferase RlmC (375 aa).

[4Fe-4S] cluster contacts are provided by Cys-3, Cys-11, Cys-14, and Cys-87. S-adenosyl-L-methionine-binding residues include Gln-212, Phe-241, Glu-262, and Asn-307. Cys-334 serves as the catalytic Nucleophile.

This sequence belongs to the class I-like SAM-binding methyltransferase superfamily. RNA M5U methyltransferase family. RlmC subfamily.

It catalyses the reaction uridine(747) in 23S rRNA + S-adenosyl-L-methionine = 5-methyluridine(747) in 23S rRNA + S-adenosyl-L-homocysteine + H(+). In terms of biological role, catalyzes the formation of 5-methyl-uridine at position 747 (m5U747) in 23S rRNA. This Cronobacter sakazakii (strain ATCC BAA-894) (Enterobacter sakazakii) protein is 23S rRNA (uracil(747)-C(5))-methyltransferase RlmC.